Consider the following 93-residue polypeptide: Small ribosomal subunit protein uS19 (93 aa).

It belongs to the universal ribosomal protein uS19 family.

Its function is as follows. Protein S19 forms a complex with S13 that binds strongly to the 16S ribosomal RNA. The chain is Small ribosomal subunit protein uS19 from Lawsonia intracellularis (strain PHE/MN1-00).